We begin with the raw amino-acid sequence, 359 residues long: Guanine nucleotide-binding protein subunit alpha-11 (359 aa).

Residues Cys9 and Cys10 are each lipidated (S-palmitoyl cysteine). Residues 38-359 enclose the G-alpha domain; that stretch reads RELKLLLLGT…QLNLKEYNLV (322 aa). Residues 41 to 54 are G1 motif; that stretch reads KLLLLGTGESGKST. Residues 46 to 53 and 180 to 183 contribute to the GTP site; these read GTGESGKS and LRVR. Ser53 contributes to the Mg(2+) binding site. Residues 178-186 form a G2 motif region; that stretch reads DVLRVRVPT. Thr186 is a Mg(2+) binding site. The interval 201 to 210 is G3 motif; that stretch reads FRMVDVGGQR. The segment at 270–277 is G4 motif; that stretch reads ILFLNKKD. GTP contacts are provided by residues 274 to 277 and Ala331; that span reads NKKD. The G5 motif stretch occupies residues 329 to 334; sequence TCATDT.

The protein belongs to the G-alpha family. G(q) subfamily. As to quaternary structure, g proteins are composed of 3 units; alpha, beta and gamma. The alpha chain contains the guanine nucleotide binding site. Interacts with RGS22. Interacts with NTSR1.

It is found in the cell membrane. The protein resides in the cytoplasm. It carries out the reaction GTP + H2O = GDP + phosphate + H(+). Guanine nucleotide-binding proteins (G proteins) function as transducers downstream of G protein-coupled receptors (GPCRs) in numerous signaling cascades. The alpha chain contains the guanine nucleotide binding site and alternates between an active, GTP-bound state and an inactive, GDP-bound state. Signaling by an activated GPCR promotes GDP release and GTP binding. The alpha subunit has a low GTPase activity that converts bound GTP to GDP, thereby terminating the signal. Both GDP release and GTP hydrolysis are modulated by numerous regulatory proteins. Signaling is mediated via phospholipase C-beta-dependent inositol lipid hydrolysis for signal propagation: activates phospholipase C-beta: following GPCR activation, GNA11 activates PLC-beta (PLCB1, PLCB2, PLCB3 or PLCB4), leading to production of diacylglycerol (DAG) and inositol 1,4,5-trisphosphate (IP3). Transduces FFAR4 signaling in response to long-chain fatty acids (LCFAs). Together with GNAQ, required for heart development. In the respiratory epithelium, transmits OXGR1-dependent signals that lead to downstream intracellular Ca(2+) release and mucocilliary clearance of airborne pathogens. The polypeptide is Guanine nucleotide-binding protein subunit alpha-11 (Gna11) (Mus musculus (Mouse)).